The chain runs to 83 residues: Protein midgut expression 1 (83 aa).

In terms of tissue distribution, endoderm-specific pattern of expression during embryogenesis; anterior and posterior midgut primordia.

Functionally, involved in morphogenesis and development. The sequence is that of Protein midgut expression 1 (mex1) from Drosophila melanogaster (Fruit fly).